Here is a 251-residue protein sequence, read N- to C-terminus: Ubiquinone/menaquinone biosynthesis C-methyltransferase UbiE (251 aa).

S-adenosyl-L-methionine is bound by residues T74, D95, 123–124, and S140; that span reads NA.

This sequence belongs to the class I-like SAM-binding methyltransferase superfamily. MenG/UbiE family.

The enzyme catalyses a 2-demethylmenaquinol + S-adenosyl-L-methionine = a menaquinol + S-adenosyl-L-homocysteine + H(+). The catalysed reaction is a 2-methoxy-6-(all-trans-polyprenyl)benzene-1,4-diol + S-adenosyl-L-methionine = a 5-methoxy-2-methyl-3-(all-trans-polyprenyl)benzene-1,4-diol + S-adenosyl-L-homocysteine + H(+). It participates in quinol/quinone metabolism; menaquinone biosynthesis; menaquinol from 1,4-dihydroxy-2-naphthoate: step 2/2. It functions in the pathway cofactor biosynthesis; ubiquinone biosynthesis. In terms of biological role, methyltransferase required for the conversion of demethylmenaquinol (DMKH2) to menaquinol (MKH2) and the conversion of 2-polyprenyl-6-methoxy-1,4-benzoquinol (DDMQH2) to 2-polyprenyl-3-methyl-6-methoxy-1,4-benzoquinol (DMQH2). The protein is Ubiquinone/menaquinone biosynthesis C-methyltransferase UbiE of Yersinia pestis bv. Antiqua (strain Antiqua).